The chain runs to 358 residues: Fructose-bisphosphate aldolase (358 aa).

Position 61 (Ser-61) interacts with D-glyceraldehyde 3-phosphate. Catalysis depends on Asp-108, which acts as the Proton donor. Zn(2+)-binding residues include His-109, Asp-143, Glu-173, and His-225. Gly-226 is a binding site for dihydroxyacetone phosphate. His-264 lines the Zn(2+) pocket. Dihydroxyacetone phosphate contacts are provided by residues 265 to 267 (GGS) and 286 to 289 (NIDT). 4 positions are modified to phosphothreonine: Thr-289, Thr-312, Thr-340, and Thr-342.

It belongs to the class II fructose-bisphosphate aldolase family. In terms of assembly, homodimer. Zn(2+) is required as a cofactor.

The catalysed reaction is beta-D-fructose 1,6-bisphosphate = D-glyceraldehyde 3-phosphate + dihydroxyacetone phosphate. The protein operates within carbohydrate degradation; glycolysis; D-glyceraldehyde 3-phosphate and glycerone phosphate from D-glucose: step 4/4. Functionally, catalyzes the aldol condensation of dihydroxyacetone phosphate (DHAP or glycerone-phosphate) with glyceraldehyde 3-phosphate (G3P) to form fructose 1,6-bisphosphate (FBP) in gluconeogenesis and the reverse reaction in glycolysis. The chain is Fructose-bisphosphate aldolase (fba1) from Schizosaccharomyces pombe (strain 972 / ATCC 24843) (Fission yeast).